We begin with the raw amino-acid sequence, 310 residues long: Upstream stimulatory factor 1 (310 aa).

Residues 1–17 (MKGQQKTAETEEGTVQI) show a composition bias toward polar residues. Disordered stretches follow at residues 1-26 (MKGQ…ATGE) and 171-209 (QGGS…EVER). Residues 190-209 (EAPRTTRDEKRRAQHNEVER) show a composition bias toward basic and acidic residues. Residues 199–254 (KRRAQHNEVERRRRDKINNWIVQLSKIIPDCSMESTKSGQSKGGILSKACDYIQEL) enclose the bHLH domain. Residues 271–292 (LQLDNDVLRQQVEDLKNKNLLL) form a leucine-zipper region. A Glycyl lysine isopeptide (Lys-Gly) (interchain with G-Cter in SUMO2) cross-link involves residue Lys306.

In terms of assembly, efficient DNA binding requires dimerization with another bHLH protein. Binds DNA as a homodimer or a heterodimer (USF1/USF2). Interacts with varicella-zoster virus IE62 protein.

It localises to the nucleus. Functionally, transcription factor that binds to a symmetrical DNA sequence (E-boxes) (5'-CACGTG-3') that is found in a variety of viral and cellular promoters. This chain is Upstream stimulatory factor 1 (USF1), found in Homo sapiens (Human).